The chain runs to 1103 residues: Retinal guanylyl cyclase 2 (1103 aa).

The first 46 residues, 1–46, serve as a signal peptide directing secretion; the sequence is MFLAPWPFSHLMLWFVTLGRQRGQHGLASFKLLWCLWLLVLMSLPL. Residues 47–465 lie on the Extracellular side of the membrane; sequence QVWAPPYKIG…DGRICQGGIN (419 aa). A disulfide bond links cysteine 104 and cysteine 132. Residues 466–490 form a helical membrane-spanning segment; the sequence is PTFALMVCLALLIALLSINGFAYFI. Residues 491–1103 are Cytoplasmic-facing; that stretch reads RHRINKIQLI…FQRRKQKSSW (613 aa). Positions 532 to 812 constitute a Protein kinase domain; it reads FQITSEVQSG…DEIFNQFKTF (281 aa). Residues 884–1014 form the Guanylate cyclase domain; the sequence is TLYFSDIVGF…DTVNTASRME (131 aa).

This sequence belongs to the adenylyl cyclase class-4/guanylyl cyclase family. As to quaternary structure, homodimer. Interacts with RD3; promotes the exit of GUCY2F from the endoplasmic reticulum and its trafficking to the photoreceptor outer segments. There are 9 conserved cysteine residues in sensory guanylate cyclases, 6 in the extracellular domain, which may be involved in intra- or interchain disulfide bonds. As to expression, expressed specifically in retina.

The protein resides in the membrane. The protein localises to the photoreceptor outer segment membrane. The enzyme catalyses GTP = 3',5'-cyclic GMP + diphosphate. Activated by GUCA1B when free calcium ions concentration is low, and inhibited by GUCA1B when free calcium ions concentration is high. Inhibited by RD3. In terms of biological role, responsible for the synthesis of cyclic GMP (cGMP) in rods and cones of photoreceptors. Plays an essential role in phototransduction, by mediating cGMP replenishment. May also participate in the trafficking of membrane-asociated proteins to the photoreceptor outer segment membrane. This chain is Retinal guanylyl cyclase 2 (GUCY2F), found in Bos taurus (Bovine).